The chain runs to 176 residues: dCTP deaminase (176 aa).

DCTP is bound by residues 99-104 (RSTLAR) and Asp-115. Glu-125 functions as the Proton donor/acceptor in the catalytic mechanism. Gln-163 contributes to the dCTP binding site.

It belongs to the dCTP deaminase family. As to quaternary structure, homotrimer.

It catalyses the reaction dCTP + H2O + H(+) = dUTP + NH4(+). The protein operates within pyrimidine metabolism; dUMP biosynthesis; dUMP from dCTP (dUTP route): step 1/2. Its function is as follows. Catalyzes the deamination of dCTP to dUTP. The protein is dCTP deaminase of Pyrobaculum calidifontis (strain DSM 21063 / JCM 11548 / VA1).